We begin with the raw amino-acid sequence, 293 residues long: 4-hydroxy-tetrahydrodipicolinate synthase (293 aa).

Pyruvate is bound at residue Thr50. Tyr138 acts as the Proton donor/acceptor in catalysis. Lys166 (schiff-base intermediate with substrate) is an active-site residue. Pyruvate is bound at residue Val206.

This sequence belongs to the DapA family. As to quaternary structure, homotetramer; dimer of dimers.

It localises to the cytoplasm. It carries out the reaction L-aspartate 4-semialdehyde + pyruvate = (2S,4S)-4-hydroxy-2,3,4,5-tetrahydrodipicolinate + H2O + H(+). It functions in the pathway amino-acid biosynthesis; L-lysine biosynthesis via DAP pathway; (S)-tetrahydrodipicolinate from L-aspartate: step 3/4. Catalyzes the condensation of (S)-aspartate-beta-semialdehyde [(S)-ASA] and pyruvate to 4-hydroxy-tetrahydrodipicolinate (HTPA). This Cutibacterium acnes (strain DSM 16379 / KPA171202) (Propionibacterium acnes) protein is 4-hydroxy-tetrahydrodipicolinate synthase.